Reading from the N-terminus, the 412-residue chain is Lysosomal phospholipase A and acyltransferase (412 aa).

The signal sequence occupies residues 1–33 (MDRHLCTCRETQLRSGLLLPLFLLMMLADLTLP). Asp46 is a substrate binding site. Cys65 and Cys89 form a disulfide bridge. Residue Asn99 is glycosylated (N-linked (GlcNAc...) asparagine). Catalysis depends on Ser198, which acts as the Acyl-ester intermediate. A Zn(2+)-binding site is contributed by Ser198. Residue Met199 coordinates substrate. Asn273 and Asn289 each carry an N-linked (GlcNAc...) asparagine glycan. Cys355 contacts Zn(2+). Catalysis depends on charge relay system residues Asp360 and His392. His392 serves as a coordination point for Zn(2+). N-linked (GlcNAc...) asparagine glycosylation occurs at Asn398.

It belongs to the AB hydrolase superfamily. Lipase family. Post-translationally, N-glycosylated. N-glycosylation is important for maturation of the enzyme and normal subcellular location. Detected in blood plasma. Detected in alveolar macrophages (at protein level). Detected in heart, liver, spleen, kidney, thymus, brain and lung.

The protein resides in the secreted. Its subcellular location is the lysosome. The protein localises to the membrane. It catalyses the reaction a 1,2-diacyl-sn-glycero-3-phosphocholine + H2O = a 2-acyl-sn-glycero-3-phosphocholine + a fatty acid + H(+). The catalysed reaction is 1-hexadecanoyl-2-(9Z-octadecenoyl)-sn-glycero-3-phosphocholine + H2O = 2-(9Z-octadecenoyl)-sn-glycero-3-phosphocholine + hexadecanoate + H(+). It carries out the reaction 1,2-di-(9Z-octadecenoyl)-sn-glycero-3-phosphocholine + H2O = 2-(9Z-octadecenoyl)-sn-glycero-3-phosphocholine + (9Z)-octadecenoate + H(+). The enzyme catalyses 1-hexadecanoyl-2-glutaroyl-sn-glycero-3-phosphocholine + H2O = 2-glutaroyl-sn-glycero-3-phosphocholine + hexadecanoate + H(+). It catalyses the reaction 1-hexadecanoyl-2-nonadioyl-sn-glycero-3-phosphocholine + H2O = 2-nonadioyl-sn-glycero-3-phosphocholine + hexadecanoate + H(+). The catalysed reaction is 1-hexadecanoyl-2-(5-oxopentanoyl)-sn-glycero-3-phosphocholine + H2O = 2-(5-oxopentanoyl)-sn-glycero-3-phosphocholine + hexadecanoate + H(+). It carries out the reaction 1-hexadecanoyl-2-(9-oxononanoyl)-sn-glycero-3-phosphocholine + H2O = 2-(9-oxononanoyl)-sn-glycero-3-phosphocholine + hexadecanoate + H(+). The enzyme catalyses 1,2-dihexadecanoyl-sn-glycero-3-phosphocholine + H2O = 2-hexadecanoyl-sn-glycero-3-phosphocholine + hexadecanoate + H(+). It catalyses the reaction a 1,2-diacyl-sn-glycero-3-phosphocholine + H2O = a 1-acyl-sn-glycero-3-phosphocholine + a fatty acid + H(+). The catalysed reaction is 1-hexadecanoyl-2-(9Z-octadecenoyl)-sn-glycero-3-phosphocholine + H2O = 1-hexadecanoyl-sn-glycero-3-phosphocholine + (9Z)-octadecenoate + H(+). It carries out the reaction 1,2-di-(9Z-octadecenoyl)-sn-glycero-3-phosphocholine + H2O = 1-(9Z-octadecenoyl)-sn-glycero-3-phosphocholine + (9Z)-octadecenoate + H(+). The enzyme catalyses 1,2-dihexadecanoyl-sn-glycero-3-phosphocholine + H2O = 1-hexadecanoyl-sn-glycero-3-phosphocholine + hexadecanoate + H(+). It catalyses the reaction a 1-acyl-sn-glycero-3-phosphocholine + H2O = sn-glycerol 3-phosphocholine + a fatty acid + H(+). The catalysed reaction is 1-hexadecanoyl-sn-glycero-3-phosphocholine + H2O = sn-glycerol 3-phosphocholine + hexadecanoate + H(+). It carries out the reaction N-(acetyl)-sphing-4-enine + a 1,2-diacyl-sn-glycero-3-phosphoethanolamine = 1-O-acyl-N-(acetyl)-sphing-4-enine + a 2-acyl-sn-glycero-3-phosphoethanolamine. The enzyme catalyses 1-hexadecanoyl-2-(9Z-octadecenoyl)-sn-glycero-3-phosphoethanolamine + N-(acetyl)-sphing-4-enine = 2-(9Z-octadecenoyl)-sn-glycero-3-phosphoethanolamine + 1-hexadecanoyl-N-(acetyl)-sphing-4-enine. It catalyses the reaction 1-hexadecanoyl-2-(9Z,12Z-octadecadienoyl)-sn-glycero-3-phosphoethanolamine + N-(acetyl)-sphing-4-enine = 2-(9Z,12Z)-octadecadienoyl-sn-glycero-3-phosphoethanolamine + 1-hexadecanoyl-N-(acetyl)-sphing-4-enine. The catalysed reaction is 1-hexadecanoyl-2-(5Z,8Z,11Z,14Z-eicosatetraenoyl)-sn-glycero-3-phosphoethanolamine + N-(acetyl)-sphing-4-enine = 2-(5Z,8Z,11Z,14Z)-eicosatetraenoyl-sn-glycero-3-phosphoethanolamine + 1-hexadecanoyl-N-(acetyl)-sphing-4-enine. It carries out the reaction N-(acetyl)-sphing-4-enine + a 1,2-diacyl-sn-glycero-3-phosphoethanolamine = 1-O-acyl-N-(acetyl)-sphing-4-enine + a 1-acyl-sn-glycero-3-phosphoethanolamine. The enzyme catalyses 1-hexadecanoyl-2-(9Z-octadecenoyl)-sn-glycero-3-phosphoethanolamine + N-(acetyl)-sphing-4-enine = 1-(9Z-octadecenoyl)-N-(acetyl)-sphing-4-enine + 1-hexadecanoyl-sn-glycero-3-phosphoethanolamine. It catalyses the reaction 1-hexadecanoyl-2-(9Z,12Z-octadecadienoyl)-sn-glycero-3-phosphoethanolamine + N-(acetyl)-sphing-4-enine = 1-(9Z,12Z-octadecadienoyl)-N-acetylsphing-4-enine + 1-hexadecanoyl-sn-glycero-3-phosphoethanolamine. The catalysed reaction is 1-hexadecanoyl-2-(5Z,8Z,11Z,14Z-eicosatetraenoyl)-sn-glycero-3-phosphoethanolamine + N-(acetyl)-sphing-4-enine = 1-(5Z,8Z,11Z,14Z)-eicosatetraenoyl-N-(acetyl)-sphing-4-enine + 1-hexadecanoyl-sn-glycero-3-phosphoethanolamine. It carries out the reaction N-(acetyl)-sphing-4-enine + a 1,2-diacyl-sn-glycero-3-phosphocholine = 1-O-acyl-N-(acetyl)-sphing-4-enine + a 2-acyl-sn-glycero-3-phosphocholine. The enzyme catalyses 1-hexadecanoyl-2-(9Z-octadecenoyl)-sn-glycero-3-phosphocholine + N-(acetyl)-sphing-4-enine = 1-hexadecanoyl-N-(acetyl)-sphing-4-enine + 2-(9Z-octadecenoyl)-sn-glycero-3-phosphocholine. It catalyses the reaction 1-hexadecanoyl-2-(9Z,12Z-octadecadienoyl)-sn-glycero-3-phosphocholine + N-(acetyl)-sphing-4-enine = 2-(9Z,12Z-octadecadienoyl)-sn-glycero-3-phosphocholine + 1-hexadecanoyl-N-(acetyl)-sphing-4-enine. The catalysed reaction is 1-hexadecanoyl-2-(5Z,8Z,11Z,14Z-eicosatetraenoyl)-sn-glycero-3-phosphocholine + N-(acetyl)-sphing-4-enine = 1-hexadecanoyl-N-(acetyl)-sphing-4-enine + 2-(5Z,8Z,11Z,14Z)-eicosatetraenoyl-sn-glycero-3-phosphocholine. It carries out the reaction 1-hexadecanoyl-2-(4Z,7Z,10Z,13Z,16Z,19Z-docosahexaenoyl)-sn-glycero-3-phosphocholine + N-(acetyl)-sphing-4-enine = 2-(4Z,7Z,10Z,13Z,16Z,19Z-docosahexaenoyl)-sn-glycero-3-phosphocholine + 1-hexadecanoyl-N-(acetyl)-sphing-4-enine. The enzyme catalyses 1-hexadecanoyl-2-nonadioyl-sn-glycero-3-phosphocholine + N-(acetyl)-sphing-4-enine = 2-nonadioyl-sn-glycero-3-phosphocholine + 1-hexadecanoyl-N-(acetyl)-sphing-4-enine. It catalyses the reaction 1-octadecanoyl-2-(9Z-octadecenoyl)-sn-glycero-3-phosphocholine + N-(acetyl)-sphing-4-enine = 1-octadecanoyl-N-(acetyl)-sphing-4-enine + 2-(9Z-octadecenoyl)-sn-glycero-3-phosphocholine. The catalysed reaction is 1-(9Z)-octadecenoyl-2-octadecanoyl-sn-glycero-3-phosphocholine + N-(acetyl)-sphing-4-enine = 2-octadecanoyl-sn-glycero-3-phosphocholine + 1-(9Z-octadecenoyl)-N-(acetyl)-sphing-4-enine. It carries out the reaction 1-octadecanoyl-2-(5Z,8Z,11Z,14Z-eicosatetraenoyl)-sn-glycero-3-phosphocholine + N-(acetyl)-sphing-4-enine = 1-octadecanoyl-N-(acetyl)-sphing-4-enine + 2-(5Z,8Z,11Z,14Z)-eicosatetraenoyl-sn-glycero-3-phosphocholine. The enzyme catalyses 1-(9Z-octadecenoyl)-2-hexadecanoyl-sn-glycero-3-phosphocholine + N-(acetyl)-sphing-4-enine = 1-(9Z-octadecenoyl)-N-(acetyl)-sphing-4-enine + 2-hexadecanoyl-sn-glycero-3-phosphocholine. It catalyses the reaction N-(acetyl)-sphing-4-enine + a 1,2-diacyl-sn-glycero-3-phosphocholine = 1-O-acyl-N-(acetyl)-sphing-4-enine + a 1-acyl-sn-glycero-3-phosphocholine. The catalysed reaction is 1-hexadecanoyl-2-(9Z-octadecenoyl)-sn-glycero-3-phosphocholine + N-(acetyl)-sphing-4-enine = 1-(9Z-octadecenoyl)-N-(acetyl)-sphing-4-enine + 1-hexadecanoyl-sn-glycero-3-phosphocholine. It carries out the reaction 1-hexadecanoyl-2-(9Z,12Z-octadecadienoyl)-sn-glycero-3-phosphocholine + N-(acetyl)-sphing-4-enine = 1-(9Z,12Z-octadecadienoyl)-N-acetylsphing-4-enine + 1-hexadecanoyl-sn-glycero-3-phosphocholine. The enzyme catalyses 1-hexadecanoyl-2-(5Z,8Z,11Z,14Z-eicosatetraenoyl)-sn-glycero-3-phosphocholine + N-(acetyl)-sphing-4-enine = 1-(5Z,8Z,11Z,14Z)-eicosatetraenoyl-N-(acetyl)-sphing-4-enine + 1-hexadecanoyl-sn-glycero-3-phosphocholine. It catalyses the reaction 1-hexadecanoyl-2-(4Z,7Z,10Z,13Z,16Z,19Z-docosahexaenoyl)-sn-glycero-3-phosphocholine + N-(acetyl)-sphing-4-enine = 1-(4Z,7Z,10Z,13Z,16Z,19Z-docosahexaenoyl)-N-(acetyl)-sphing-4-enine + 1-hexadecanoyl-sn-glycero-3-phosphocholine. The catalysed reaction is 1-octadecanoyl-2-(9Z-octadecenoyl)-sn-glycero-3-phosphocholine + N-(acetyl)-sphing-4-enine = 1-(9Z-octadecenoyl)-N-(acetyl)-sphing-4-enine + 1-octadecanoyl-sn-glycero-3-phosphocholine. It carries out the reaction 1-octadecanoyl-2-(9Z,12Z)-octadecadienoyl-sn-glycero-3-phosphocholine + N-(acetyl)-sphing-4-enine = 1-(9Z,12Z-octadecadienoyl)-N-acetylsphing-4-enine + 1-octadecanoyl-sn-glycero-3-phosphocholine. The enzyme catalyses 1-(9Z-octadecenoyl)-2-hexadecanoyl-sn-glycero-3-phosphocholine + N-(acetyl)-sphing-4-enine = 1-hexadecanoyl-N-(acetyl)-sphing-4-enine + 1-(9Z-octadecenoyl)-sn-glycero-3-phosphocholine. It catalyses the reaction 1-(9Z)-octadecenoyl-2-octadecanoyl-sn-glycero-3-phosphocholine + N-(acetyl)-sphing-4-enine = 1-octadecanoyl-N-(acetyl)-sphing-4-enine + 1-(9Z-octadecenoyl)-sn-glycero-3-phosphocholine. The catalysed reaction is 1,2-di-(9Z-octadecenoyl)-sn-glycero-3-phosphocholine + N-(acetyl)-sphing-4-enine = 1-(9Z-octadecenoyl)-N-(acetyl)-sphing-4-enine + 1-(9Z-octadecenoyl)-sn-glycero-3-phosphocholine. It carries out the reaction 1-octadecanoyl-2-(5Z,8Z,11Z,14Z-eicosatetraenoyl)-sn-glycero-3-phosphocholine + N-(acetyl)-sphing-4-enine = 1-(5Z,8Z,11Z,14Z)-eicosatetraenoyl-N-(acetyl)-sphing-4-enine + 1-octadecanoyl-sn-glycero-3-phosphocholine. The enzyme catalyses a 1,2-diacyl-sn-glycero-3-phospho-L-serine + N-(acetyl)-sphing-4-enine = a 2-acyl-sn-glycero-3-phospho-L-serine + 1-O-acyl-N-(acetyl)-sphing-4-enine. It catalyses the reaction 1-octadecanoyl-2-(9Z-octadecenoyl)-sn-glycero-3-phospho-L-serine + N-(acetyl)-sphing-4-enine = 2-(9Z-octadecenoyl)-sn-glycero-3-phospho-L-serine + 1-octadecanoyl-N-(acetyl)-sphing-4-enine. The catalysed reaction is a 1,2-diacyl-sn-glycero-3-phospho-L-serine + N-(acetyl)-sphing-4-enine = 1-O-acyl-N-(acetyl)-sphing-4-enine + a 1-acyl-sn-glycero-3-phospho-L-serine. It carries out the reaction 1-octadecanoyl-2-(9Z-octadecenoyl)-sn-glycero-3-phospho-L-serine + N-(acetyl)-sphing-4-enine = 1-octadecanoyl-sn-glycero-3-phosphoserine + 1-(9Z-octadecenoyl)-N-(acetyl)-sphing-4-enine. The enzyme catalyses a 1,2-diacyl-sn-glycero-3-phospho-(1'-sn-glycerol) + N-(acetyl)-sphing-4-enine = 2-acyl-sn-glycero-3-phospho-(1'-sn-glycerol) + 1-O-acyl-N-(acetyl)-sphing-4-enine. It catalyses the reaction 1-octadecanoyl-2-(9Z-octadecenoyl)-sn-glycero-3-phospho-(1'-sn-glycerol) + N-(acetyl)-sphing-4-enine = 2-(9Z-octadecenoyl)-sn-glycero-3-phospho-(1'-sn-glycerol) + 1-octadecanoyl-N-(acetyl)-sphing-4-enine. The catalysed reaction is a 1,2-diacyl-sn-glycero-3-phospho-(1'-sn-glycerol) + N-(acetyl)-sphing-4-enine = 1-O-acyl-N-(acetyl)-sphing-4-enine + 1-acyl-sn-glycero-3-phospho-(1'-sn-glycerol). It carries out the reaction 1-octadecanoyl-2-(9Z-octadecenoyl)-sn-glycero-3-phospho-(1'-sn-glycerol) + N-(acetyl)-sphing-4-enine = 1-octadecanoyl-sn-glycero-3-phospho-(1'-sn-glycerol) + 1-(9Z-octadecenoyl)-N-(acetyl)-sphing-4-enine. The enzyme catalyses an N-acylethanolamine + a 1,2-diacyl-sn-glycero-3-phosphocholine = 2-(acylamino)ethyl fatty acid + a 2-acyl-sn-glycero-3-phosphocholine. It catalyses the reaction an N-acylethanolamine + a 1,2-diacyl-sn-glycero-3-phosphocholine = 2-(acylamino)ethyl fatty acid + a 1-acyl-sn-glycero-3-phosphocholine. The catalysed reaction is N-(5Z,8Z,11Z,14Z-eicosatetraenoyl)-ethanolamine + 1,2-di-(9Z-octadecenoyl)-sn-glycero-3-phosphocholine = 2-[(5Z,8Z,11Z,14Z)-eicosatetraenoylamino]ethyl (9Z)-octadecenoate + (9Z-octadecenoyl)-sn-glycero-3-phosphocholine. It carries out the reaction N-(9Z-octadecenoyl) ethanolamine + 1,2-di-(9Z-octadecenoyl)-sn-glycero-3-phosphocholine = 2-[(9Z)-octadecenoylamino]ethyl (9Z)-octadecenoate + (9Z-octadecenoyl)-sn-glycero-3-phosphocholine. The enzyme catalyses a 3-acyl-sn-glycerol + a 1,2-diacyl-sn-glycero-3-phosphocholine = a 1,3-diacylglycerol + a 1-acyl-sn-glycero-3-phosphocholine. It catalyses the reaction a 3-acyl-sn-glycerol + a 1,2-diacyl-sn-glycero-3-phosphocholine = a 1,3-diacylglycerol + a 2-acyl-sn-glycero-3-phosphocholine. The catalysed reaction is 3-(9Z-octadecenoyl)-sn-glycerol + 1,2-di-(9Z-octadecenoyl)-sn-glycero-3-phosphocholine = 1,3-di-(9Z-octadecenoyl)-glycerol + (9Z-octadecenoyl)-sn-glycero-3-phosphocholine. It carries out the reaction 3-hexadecanoyl-sn-glycerol + 1,2-di-(9Z-octadecenoyl)-sn-glycero-3-phosphocholine = 1-(9Z)-octadecenoyl-3-hexadecanoyl-sn-glycerol + (9Z-octadecenoyl)-sn-glycero-3-phosphocholine. The enzyme catalyses a 1-acyl-sn-glycerol + a 1,2-diacyl-sn-glycero-3-phosphocholine = a 1,3-diacylglycerol + a 2-acyl-sn-glycero-3-phosphocholine. It catalyses the reaction a 1-acyl-sn-glycerol + a 1,2-diacyl-sn-glycero-3-phosphocholine = a 1,3-diacylglycerol + a 1-acyl-sn-glycero-3-phosphocholine. The catalysed reaction is 1-(9Z-octadecenoyl)-sn-glycerol + 1,2-di-(9Z-octadecenoyl)-sn-glycero-3-phosphocholine = 1,3-di-(9Z-octadecenoyl)-glycerol + (9Z-octadecenoyl)-sn-glycero-3-phosphocholine. It carries out the reaction 1-hexadecanoyl-sn-glycerol + 1,2-di-(9Z-octadecenoyl)-sn-glycero-3-phosphocholine = 1-hexadecanoyl-3-(9Z)-octadecenoyl-sn-glycerol + (9Z-octadecenoyl)-sn-glycero-3-phosphocholine. The enzyme catalyses a 2-acylglycerol + a 1,2-diacyl-sn-glycero-3-phosphocholine = a 1,2-diacylglycerol + a 2-acyl-sn-glycero-3-phosphocholine. It catalyses the reaction a 2-acylglycerol + a 1,2-diacyl-sn-glycero-3-phosphocholine = a 1,2-diacylglycerol + a 1-acyl-sn-glycero-3-phosphocholine. The catalysed reaction is 2-hexadecanoylglycerol + 1,2-di-(9Z-octadecenoyl)-sn-glycero-3-phosphocholine = 1-(9Z)-octadecenoyl-2-hexadecanoylglycerol + (9Z-octadecenoyl)-sn-glycero-3-phosphocholine. It carries out the reaction 1-O-alkylglycerol + a 1,2-diacyl-sn-glycero-3-phosphocholine = 1-O-alkyl-3-acylglycerol + a 1-acyl-sn-glycero-3-phosphocholine. The enzyme catalyses 1-O-alkylglycerol + a 1,2-diacyl-sn-glycero-3-phosphocholine = 1-O-alkyl-3-acylglycerol + a 2-acyl-sn-glycero-3-phosphocholine. It catalyses the reaction 1-O-hexadecylglycerol + 1,2-di-(9Z-octadecenoyl)-sn-glycero-3-phosphocholine = 1-O-hexadecyl-3-(9Z)-octadecenoylglycerol + (9Z-octadecenoyl)-sn-glycero-3-phosphocholine. The catalysed reaction is 1-O-alkyl-2-acyl-sn-glycerol + a 1,2-diacyl-sn-glycero-3-phosphocholine = 1-O-alkyl-2,3-diacyl-sn-glycerol + a 2-acyl-sn-glycero-3-phosphocholine. It carries out the reaction 1-O-alkyl-2-acyl-sn-glycerol + a 1,2-diacyl-sn-glycero-3-phosphocholine = 1-O-alkyl-2,3-diacyl-sn-glycerol + a 1-acyl-sn-glycero-3-phosphocholine. The enzyme catalyses 1-O-hexadecyl-2-acetyl-sn-glycerol + 1,2-di-(9Z-octadecenoyl)-sn-glycero-3-phosphocholine = 1-O-hexadecyl-2-acetyl-3-(9Z)-octadecenoyl-sn-glycerol + (9Z-octadecenoyl)-sn-glycero-3-phosphocholine. It catalyses the reaction 1-O-hexadecyl-2-O-methyl-sn-glycerol + 1,2-di-(9Z-octadecenoyl)-sn-glycero-3-phosphocholine = 1-O-hexadecyl-2-O-methyl-3-(9Z)-octadecenoyl-sn-glycerol + (9Z-octadecenoyl)-sn-glycero-3-phosphocholine. The catalysed reaction is a 1,2-diacyl-sn-glycero-3-phosphoethanolamine + H2O = a 1-acyl-sn-glycero-3-phosphoethanolamine + a fatty acid + H(+). It carries out the reaction 1-acyl-2-(5Z,8Z,11Z,14Z)-eicosatetraenoyl-sn-glycero-3-phosphoethanolamine + H2O = a 1-acyl-sn-glycero-3-phosphoethanolamine + (5Z,8Z,11Z,14Z)-eicosatetraenoate + H(+). The enzyme catalyses a 1,2-diacyl-sn-glycero-3-phospho-(1'-sn-glycerol) + H2O = 1-acyl-sn-glycero-3-phospho-(1'-sn-glycerol) + a fatty acid + H(+). It catalyses the reaction 1-hexadecanoyl-2-(9Z-octadecenoyl)-sn-glycero-3-phospho-(1'-sn-glycerol) + H2O = 1-hexadecanoyl-sn-glycero-3-phospho-(1'-sn-glycerol) + (9Z)-octadecenoate + H(+). The catalysed reaction is a 1,2-diacyl-sn-glycero-3-phospho-(1'-sn-glycerol) + H2O = 2-acyl-sn-glycero-3-phospho-(1'-sn-glycerol) + a fatty acid + H(+). It carries out the reaction 1-hexadecanoyl-2-(9Z-octadecenoyl)-sn-glycero-3-phospho-(1'-sn-glycerol) + H2O = 2-(9Z-octadecenoyl)-sn-glycero-3-phospho-(1'-sn-glycerol) + hexadecanoate + H(+). Phospholipase sn-2 versus sn-1 positional specificity is affected by the phospholipid composition of membranes. Phospholipase A2 activity toward 1-hexadecanoyl-2-(5Z,8Z,11Z,14Z-eicosatetraenoyl)-sn-glycero-3-phosphocholine (PAPE) is enhanced in the presence of 1,2-dioleoyl-sn-glycero-3-phosphocholine (DOPC), which promotes lipid bilayer formation. O-acyltransferase activity is inhibited by antiarrhythmic drug amiodarone. Functionally, has dual calcium-independent phospholipase and O-acyltransferase activities with a potential role in glycerophospholipid homeostasis and remodeling of acyl groups of lipophilic alcohols present in acidic cellular compartments. Catalyzes hydrolysis of the ester bond of the fatty acyl group attached at sn-1 or sn-2 position of phospholipids (phospholipase A1 or A2 activity) and transfer it to the hydroxyl group at the first carbon of lipophilic alcohols (O-acyltransferase activity). Among preferred fatty acyl donors are phosphatidylcholines, phosphatidylethanolamines, phosphatidylglycerols and phosphatidylserines. Favors sn-2 over sn-1 deacylation of unsaturated fatty acyl groups of phosphatidylcholines, phosphatidylethanolamines, and phosphatidylglycerols. Among preferred fatty acyl acceptors are natural lipophilic alcohols including short-chain ceramide N-acetyl-sphingosine (C2 ceramide), alkylacylglycerols, monoacylglycerols, and acylethanolamides such as anandamide and oleoylethanolamide. Selectively hydrolyzes the sn-1 fatty acyl group of truncated oxidized phospholipids and may play a role in detoxification of reactive oxidized phospholipids during oxidative stress. Required for normal phospholipid degradation in alveolar macrophages with potential implications in the clearance of pulmonary surfactant, which is mainly composed of dipalmitoylphosphatidylcholine (1,2-dihexadecanoyl-sn-glycero-3-phosphocholine). Involved in the first step of bis(monoacylglycero)phosphate (BMP) de novo synthesis from phosphatidylglycerol (1,2-diacyl-sn-glycero-3-phospho-(1'-sn-glycerol), PG). BMP is an important player in cargo sorting and degradation, regulation of cellular cholesterol levels and intercellular communication. At neutral pH, hydrolyzes the sn-1 fatty acyl group of the lysophosphatidylcholines. This Mus musculus (Mouse) protein is Lysosomal phospholipase A and acyltransferase.